The primary structure comprises 158 residues: Crossover junction endodeoxyribonuclease RuvC (158 aa).

Catalysis depends on residues Asp-7, Glu-66, and Asp-139. Asp-7, Glu-66, and Asp-139 together coordinate Mg(2+).

This sequence belongs to the RuvC family. In terms of assembly, homodimer which binds Holliday junction (HJ) DNA. The HJ becomes 2-fold symmetrical on binding to RuvC with unstacked arms; it has a different conformation from HJ DNA in complex with RuvA. In the full resolvosome a probable DNA-RuvA(4)-RuvB(12)-RuvC(2) complex forms which resolves the HJ. Requires Mg(2+) as cofactor.

It localises to the cytoplasm. The catalysed reaction is Endonucleolytic cleavage at a junction such as a reciprocal single-stranded crossover between two homologous DNA duplexes (Holliday junction).. Its function is as follows. The RuvA-RuvB-RuvC complex processes Holliday junction (HJ) DNA during genetic recombination and DNA repair. Endonuclease that resolves HJ intermediates. Cleaves cruciform DNA by making single-stranded nicks across the HJ at symmetrical positions within the homologous arms, yielding a 5'-phosphate and a 3'-hydroxyl group; requires a central core of homology in the junction. The consensus cleavage sequence is 5'-(A/T)TT(C/G)-3'. Cleavage occurs on the 3'-side of the TT dinucleotide at the point of strand exchange. HJ branch migration catalyzed by RuvA-RuvB allows RuvC to scan DNA until it finds its consensus sequence, where it cleaves and resolves the cruciform DNA. The sequence is that of Crossover junction endodeoxyribonuclease RuvC from Campylobacter hominis (strain ATCC BAA-381 / DSM 21671 / CCUG 45161 / LMG 19568 / NCTC 13146 / CH001A).